Consider the following 163-residue polypeptide: Glutathione peroxidase 2 (163 aa).

C36 is an active-site residue.

This sequence belongs to the glutathione peroxidase family.

It localises to the cytoplasm. It catalyses the reaction 2 glutathione + H2O2 = glutathione disulfide + 2 H2O. May constitute a glutathione peroxidase-like protective system against oxidative stresses. The chain is Glutathione peroxidase 2 (gpx-2) from Caenorhabditis elegans.